We begin with the raw amino-acid sequence, 500 residues long: Aspartyl/glutamyl-tRNA(Asn/Gln) amidotransferase subunit B (500 aa).

Belongs to the GatB/GatE family. GatB subfamily. As to quaternary structure, heterotrimer of A, B and C subunits.

The catalysed reaction is L-glutamyl-tRNA(Gln) + L-glutamine + ATP + H2O = L-glutaminyl-tRNA(Gln) + L-glutamate + ADP + phosphate + H(+). It catalyses the reaction L-aspartyl-tRNA(Asn) + L-glutamine + ATP + H2O = L-asparaginyl-tRNA(Asn) + L-glutamate + ADP + phosphate + 2 H(+). Functionally, allows the formation of correctly charged Asn-tRNA(Asn) or Gln-tRNA(Gln) through the transamidation of misacylated Asp-tRNA(Asn) or Glu-tRNA(Gln) in organisms which lack either or both of asparaginyl-tRNA or glutaminyl-tRNA synthetases. The reaction takes place in the presence of glutamine and ATP through an activated phospho-Asp-tRNA(Asn) or phospho-Glu-tRNA(Gln). The sequence is that of Aspartyl/glutamyl-tRNA(Asn/Gln) amidotransferase subunit B from Allorhizobium ampelinum (strain ATCC BAA-846 / DSM 112012 / S4) (Agrobacterium vitis (strain S4)).